Consider the following 693-residue polypeptide: Methionine--tRNA ligase (693 aa).

The 'HIGH' region signature appears at 12 to 22; sequence PYANGPLHLGH. Residues cysteine 143, cysteine 146, cysteine 156, and cysteine 159 each contribute to the Zn(2+) site. Residues 330–334 carry the 'KMSKS' region motif; sequence KMSKS. Lysine 333 is a binding site for ATP. A disordered region spans residues 557-576; that stretch reads APTAKNEAAKPAAPAAAKTE. In terms of domain architecture, tRNA-binding spans 590–693; it reads DFAKLDLRIG…SGAQPGMPVR (104 aa).

Belongs to the class-I aminoacyl-tRNA synthetase family. MetG type 1 subfamily. In terms of assembly, homodimer. Zn(2+) serves as cofactor.

The protein localises to the cytoplasm. The catalysed reaction is tRNA(Met) + L-methionine + ATP = L-methionyl-tRNA(Met) + AMP + diphosphate. Functionally, is required not only for elongation of protein synthesis but also for the initiation of all mRNA translation through initiator tRNA(fMet) aminoacylation. In Stenotrophomonas maltophilia (strain R551-3), this protein is Methionine--tRNA ligase.